Consider the following 452-residue polypeptide: Probable E3 ubiquitin-protein ligase ARI15 (452 aa).

Residues 22–256 (SRVYCGICSN…GTSGSCLAPA (235 aa)) form a TRIAD supradomain region. Residues Cys-26, Cys-29, Cys-54, His-56, Cys-59, Cys-62, Cys-83, Cys-88, Cys-128, Cys-133, Cys-154, Cys-156, Cys-161, Cys-164, His-169, Cys-174, Cys-208, Cys-211, Cys-229, Cys-231, Cys-236, Cys-239, His-246, and Cys-252 each contribute to the Zn(2+) site. The RING-type 1 zinc-finger motif lies at 26-88 (CGICSNIGDD…TAISCPDRDC (63 aa)). The segment at 106–174 (AMYELYILKS…MLESHRPVTC (69 aa)) adopts an IBR-type zinc-finger fold. The RING-type 2; atypical zinc-finger motif lies at 208–239 (CPHCFIPVEIDGERPWAQFLTCVCSGRFCWKC). A RanBP2-type zinc finger spans residues 414-445 (NYGGPYWLCDRCTYGNSWFQRACKMCCDPTAS).

The protein belongs to the RBR family. Ariadne subfamily. Requires Zn(2+) as cofactor. In terms of tissue distribution, ubiquitous.

It carries out the reaction [E2 ubiquitin-conjugating enzyme]-S-ubiquitinyl-L-cysteine + [acceptor protein]-L-lysine = [E2 ubiquitin-conjugating enzyme]-L-cysteine + [acceptor protein]-N(6)-ubiquitinyl-L-lysine.. The protein operates within protein modification; protein ubiquitination. Functionally, might act as an E3 ubiquitin-protein ligase, or as part of E3 complex, which accepts ubiquitin from specific E2 ubiquitin-conjugating enzymes and then transfers it to substrates. In Arabidopsis thaliana (Mouse-ear cress), this protein is Probable E3 ubiquitin-protein ligase ARI15 (ARI15).